Consider the following 191-residue polypeptide: CASP-like protein 4C3 (191 aa).

Topologically, residues 1–29 (METGDSAVKSSQDVHYYGKSTAQKHRRSN) are cytoplasmic. A helical transmembrane segment spans residues 30–50 (GIILIFRALTFSFSLTSVIVM). Residues 51-72 (GTNRHRIDAQSRVAWYDFDPFR) lie on the Extracellular side of the membrane. The helical transmembrane segment at 73–93 (YVLAVNAIICIYSFVEIWLAV) threads the bilayer. The Cytoplasmic segment spans residues 94–116 (YTYLKDTLFLPETFQVWFDYGHD). A helical membrane pass occupies residues 117–137 (QGFAYLLFSANSAGIAMAQLL). At 138–162 (QSGNSLIHGAYRCSDAGVFCTQARA) the chain is on the extracellular side. The chain crosses the membrane as a helical span at residues 163 to 183 (SIGLGFGAFLFLALSSLLTGL). Residues 184 to 191 (RVARWYFS) lie on the Cytoplasmic side of the membrane.

It belongs to the Casparian strip membrane proteins (CASP) family. Homodimer and heterodimers.

The protein localises to the cell membrane. The protein is CASP-like protein 4C3 of Physcomitrium patens (Spreading-leaved earth moss).